Consider the following 78-residue polypeptide: Defensin beta 136 (78 aa).

Residues 1–21 form the signal peptide; sequence MNLCLSALLFFLVILLPSGKG. Disulfide bonds link C33/C60, C40/C54, and C44/C61.

The protein belongs to the beta-defensin family.

Its subcellular location is the secreted. Host defense peptide that exhibits antibacterial and antifungal activity. Exhibits antimicrobial activity against E.coli, S.aureus and C.albicans (in vitro). Has high lipopolysaccharide (LPS)-binding affinity, and may thereby be involved in immunoregulation through LPS neutralization. The chain is Defensin beta 136 (DEFB136) from Homo sapiens (Human).